A 161-amino-acid chain; its full sequence is Ecotin (161 aa).

An N-terminal signal peptide occupies residues Met1 to Ala23. Cys69 and Cys106 are oxidised to a cystine.

It belongs to the protease inhibitor I11 (ecotin) family. As to quaternary structure, homodimer.

Its subcellular location is the periplasm. Its function is as follows. General inhibitor of family S1 serine proteases. The polypeptide is Ecotin (Pseudomonas fluorescens (strain Pf0-1)).